A 159-amino-acid chain; its full sequence is Endoribonuclease YbeY (159 aa).

3 residues coordinate Zn(2+): histidine 125, histidine 129, and histidine 135.

It belongs to the endoribonuclease YbeY family. Requires Zn(2+) as cofactor.

It is found in the cytoplasm. In terms of biological role, single strand-specific metallo-endoribonuclease involved in late-stage 70S ribosome quality control and in maturation of the 3' terminus of the 16S rRNA. The polypeptide is Endoribonuclease YbeY (Limosilactobacillus reuteri (strain DSM 20016) (Lactobacillus reuteri)).